The following is a 600-amino-acid chain: Molybdenum cofactor biosynthesis protein moc-5 (600 aa).

The interval 4 to 371 is molybdenum cofactor biosynthesis protein A; sequence RAGKKLFQWS…AVNNKKARHA (368 aa). The region spanning 68-284 is the Radical SAM core domain; sequence MFMREHTYLR…VDKYGDGVIR (217 aa). R77 is a binding site for GTP. [4Fe-4S] cluster is bound by residues C84 and C88. Y90 lines the S-adenosyl-L-methionine pocket. C91 lines the [4Fe-4S] cluster pocket. R127 serves as a coordination point for GTP. Position 131 (G131) interacts with S-adenosyl-L-methionine. T158 lines the GTP pocket. Position 182 (S182) interacts with S-adenosyl-L-methionine. A GTP-binding site is contributed by K218. Residue M252 coordinates S-adenosyl-L-methionine. Positions 316 and 319 each coordinate [4Fe-4S] cluster. 321-323 provides a ligand contact to GTP; that stretch reads RLR. Position 333 (C333) interacts with [4Fe-4S] cluster. Residues 369 to 390 form a disordered region; that stretch reads RHAVFRNGRSEEPAKSSNDSYR. The interval 396–595 is molybdenum cofactor biosynthesis protein C; the sequence is TSASSILVHL…SGGKTTYTID (200 aa). Residue D566 is the For molybdenum cofactor biosynthesis protein C activity of the active site.

This sequence in the C-terminal section; belongs to the MoaC family. In the N-terminal section; belongs to the radical SAM superfamily. MoaA family. Isoform a and isoform b probably form a heterooligomer. Requires [4Fe-4S] cluster as cofactor.

The enzyme catalyses GTP + AH2 + S-adenosyl-L-methionine = (8S)-3',8-cyclo-7,8-dihydroguanosine 5'-triphosphate + 5'-deoxyadenosine + L-methionine + A + H(+). It carries out the reaction (8S)-3',8-cyclo-7,8-dihydroguanosine 5'-triphosphate = cyclic pyranopterin phosphate + diphosphate. Its pathway is cofactor biosynthesis; molybdopterin biosynthesis. Its function is as follows. Probably forms a complex with isoform b that catalyzes the conversion of 5'-GTP to cyclic pyranopterin monophosphate (cPMP). Catalyzes the cyclization of GTP to (8S)-3',8-cyclo-7,8-dihydroguanosine 5'-triphosphate and mocs1b catalyzes the subsequent conversion of (8S)-3',8-cyclo-7,8-dihydroguanosine 5'-triphosphate to cPMP. In terms of biological role, probably forms a complex with isoform a that catalyzes the conversion of 5'-GTP to cyclic pyranopterin monophosphate (cPMP). The polypeptide is Molybdenum cofactor biosynthesis protein moc-5 (Caenorhabditis elegans).